A 96-amino-acid chain; its full sequence is Small ribosomal subunit protein bS6 (96 aa).

It belongs to the bacterial ribosomal protein bS6 family.

Its function is as follows. Binds together with bS18 to 16S ribosomal RNA. The sequence is that of Small ribosomal subunit protein bS6 (rpsF) from Mycobacterium leprae (strain TN).